The sequence spans 289 residues: Ribosomal RNA small subunit methyltransferase A (289 aa).

S-adenosyl-L-methionine-binding residues include N21, L23, G48, E69, D94, and N120.

It belongs to the class I-like SAM-binding methyltransferase superfamily. rRNA adenine N(6)-methyltransferase family. RsmA subfamily.

The protein resides in the cytoplasm. The catalysed reaction is adenosine(1518)/adenosine(1519) in 16S rRNA + 4 S-adenosyl-L-methionine = N(6)-dimethyladenosine(1518)/N(6)-dimethyladenosine(1519) in 16S rRNA + 4 S-adenosyl-L-homocysteine + 4 H(+). Specifically dimethylates two adjacent adenosines (A1518 and A1519) in the loop of a conserved hairpin near the 3'-end of 16S rRNA in the 30S particle. May play a critical role in biogenesis of 30S subunits. The chain is Ribosomal RNA small subunit methyltransferase A from Actinobacillus pleuropneumoniae serotype 7 (strain AP76).